The following is a 113-amino-acid chain: Ig heavy chain V-III region T957 (113 aa).

An Ig-like domain is found at 1-113 (EVKLEESGGG…YWGQGTLVTV (113 aa)). An intrachain disulfide couples Cys22 to Cys98.

In Mus musculus (Mouse), this protein is Ig heavy chain V-III region T957.